The chain runs to 248 residues: Pulmonary surfactant-associated protein A (248 aa).

The N-terminal stretch at 1–20 (MLLCSLTLTLILLAVSGTKC) is a signal peptide. The Collagen-like domain maps to 31–100 (GVPGIPGSPG…PGERGPPGPP (70 aa)). The disordered stretch occupies residues 34-105 (GIPGSPGLPG…PPGPPAYPDE (72 aa)). Positions 54–65 (PGPPGPIGPPGG) are enriched in pro residues. Positions 84 to 93 (ERGDKGEPGE) are enriched in basic and acidic residues. One can recognise a C-type lectin domain in the interval 134–247 (VGEKVFSTNG…CLQYRLAICE (114 aa)). 2 disulfides stabilise this stretch: cysteine 155-cysteine 246 and cysteine 224-cysteine 238. Asparagine 207 carries N-linked (GlcNAc...) asparagine glycosylation. The Ca(2+) site is built by glutamate 215, arginine 217, asparagine 234, and aspartate 235.

Belongs to the SFTPA family. As to quaternary structure, oligomeric complex of 6 set of homotrimers.

It is found in the secreted. The protein resides in the extracellular space. The protein localises to the extracellular matrix. It localises to the surface film. Its function is as follows. In presence of calcium ions, it binds to surfactant phospholipids and contributes to lower the surface tension at the air-liquid interface in the alveoli of the mammalian lung and is essential for normal respiration. Enhances the expression of MYO18A/SP-R210 on alveolar macrophages. This chain is Pulmonary surfactant-associated protein A (SFTPA1), found in Equus caballus (Horse).